We begin with the raw amino-acid sequence, 460 residues long: Ammonium transporter Rh type B (460 aa).

Over 1 to 10 the chain is Cytoplasmic; that stretch reads MTGYSTNMRI. The chain crosses the membrane as a helical span at residues 11–31; sequence KLPVFCLLLEFITIILFAVFV. The Extracellular portion of the chain corresponds to 32–62; it reads RYDHESDAKQWHDEMRNHSVQNAENDFYFRY. The N-linked (GlcNAc...) asparagine glycan is linked to asparagine 48. Residues 63-83 traverse the membrane as a helical segment; the sequence is PSFQDVHVMIFIGFGFLMTFL. Topologically, residues 84–87 are cytoplasmic; that stretch reads KRYG. Residues 88-108 form a helical membrane-spanning segment; that stretch reads FSSVAFNFLIAAFGLQWSTLI. At 109–125 the chain is on the extracellular side; the sequence is QGFFHGFHDGKIHVGIE. Residues 126–146 traverse the membrane as a helical segment; sequence SMINADFCTGAVLISFGAVLG. Over 147–150 the chain is Cytoplasmic; that stretch reads KTSP. A helical transmembrane segment spans residues 151–171; that stretch reads VQLIVMTLIEVTLFGINEYII. Residues 172 to 179 lie on the Extracellular side of the membrane; it reads LNIVGAKD. Residues 180–202 form a helical membrane-spanning segment; it reads AGGSMTIHTFGAYFGLIVSRVLY. The Cytoplasmic segment spans residues 203–220; that stretch reads RDDLEKSRQREGSVYHSD. The chain crosses the membrane as a helical span at residues 221-241; sequence LFAMIGTIYLWMFWPSFNSAI. Topologically, residues 242 to 252 are extracellular; the sequence is TAHGDDQHRTV. Residues 253–273 traverse the membrane as a helical segment; that stretch reads MNTYYSLAACTLATFGFSALL. Residues 274–283 are Cytoplasmic-facing; the sequence is NGEGKLDMVH. A helical transmembrane segment spans residues 284–304; that stretch reads IQNAALAGGVAVGTSGEMMLT. Proline 305 is a topological domain (extracellular). The helical transmembrane segment at 306 to 326 threads the bilayer; it reads FGAMIAGTLAGMISVLGYKYL. Over 327–347 the chain is Cytoplasmic; the sequence is TPVLDSKLKIQDTCGVHNLHG. A helical transmembrane segment spans residues 348–368; the sequence is MPGILGALIGAIVALFATAEI. Residues 369–394 lie on the Extracellular side of the membrane; that stretch reads YGAGMEDVFPLISDGSRTAKQQSLYQ. The helical transmembrane segment at 395-415 threads the bilayer; sequence FLALLVALGFAILGGLVVGFI. Topologically, residues 416-460 are cytoplasmic; that stretch reads LKLPIFGTPSDAECFEDAVYWEVPGGEGHQQLTVVINNEDPDTQA.

This sequence belongs to the ammonium transporter (TC 2.A.49) family. Rh subfamily.

The protein resides in the basolateral cell membrane. Its subcellular location is the cytoplasmic vesicle membrane. In terms of biological role, functions as a specific ammonium transporter. This is Ammonium transporter Rh type B (rhbg) from Xenopus tropicalis (Western clawed frog).